A 329-amino-acid chain; its full sequence is Ribosomal RNA small subunit methyltransferase H (329 aa).

Residues 47-49 (GGH), aspartate 67, phenylalanine 93, aspartate 115, and glutamine 122 contribute to the S-adenosyl-L-methionine site.

This sequence belongs to the methyltransferase superfamily. RsmH family.

The protein localises to the cytoplasm. The catalysed reaction is cytidine(1402) in 16S rRNA + S-adenosyl-L-methionine = N(4)-methylcytidine(1402) in 16S rRNA + S-adenosyl-L-homocysteine + H(+). Functionally, specifically methylates the N4 position of cytidine in position 1402 (C1402) of 16S rRNA. The polypeptide is Ribosomal RNA small subunit methyltransferase H (Blochmanniella pennsylvanica (strain BPEN)).